Consider the following 394-residue polypeptide: Saposin-like protein 11 (394 aa).

Residues 1–18 (MSVFRFLLFLSLLVGSNA) form the signal peptide. N-linked (GlcNAc...) asparagine glycosylation is found at Asn-25 and Asn-272. In terms of domain architecture, Saposin B-type spans 306–394 (GNMVCDICEK…SFCKHVPFCK (89 aa)). Cystine bridges form between Cys-310/Cys-393, Cys-313/Cys-387, and Cys-343/Cys-359.

This is Saposin-like protein 11 (spp-11) from Caenorhabditis elegans.